Consider the following 246-residue polypeptide: uncharacterized protein (246 aa).

Ser-194 is subject to Phosphoserine.

This is an uncharacterized protein from Schizosaccharomyces pombe (strain 972 / ATCC 24843) (Fission yeast).